Consider the following 144-residue polypeptide: Maximins 10/H3 (144 aa).

Residues methionine 1–alanine 18 form the signal peptide. The propeptide occupies arginine 19–arginine 43. Residue serine 70 is modified to Serine amide. A propeptide spanning residues threonine 74–arginine 123 is cleaved from the precursor. At isoleucine 143 the chain carries Isoleucine amide.

The protein belongs to the bombinin family. In terms of tissue distribution, expressed by the skin glands.

It is found in the secreted. Functionally, maximin-10 shows antimicrobial activity against bacteria and against the fungus C.albicans. It has little hemolytic activity. Maximin-H3 shows antibacterial activity against both Gram-positive and Gram-negative bacteria. It also shows antimicrobial activity against the fungus C.albicans. Shows strong hemolytic activity. The chain is Maximins 10/H3 from Bombina maxima (Giant fire-bellied toad).